A 271-amino-acid polypeptide reads, in one-letter code: Uridine-cytidine kinase 1-A (271 aa).

24–32 (GGTASGKST) serves as a coordination point for ATP. D81, Y109, H114, R163, R172, and Q180 together coordinate substrate. D209 is an ATP binding site. A disordered region spans residues 241-271 (SQKRTFPGQGESGGLILPGKRTHLESSSRPH). Basic and acidic residues predominate over residues 262–271 (THLESSSRPH).

This sequence belongs to the uridine kinase family.

The catalysed reaction is uridine + ATP = UMP + ADP + H(+). The enzyme catalyses cytidine + ATP = CMP + ADP + H(+). It participates in pyrimidine metabolism; CTP biosynthesis via salvage pathway; CTP from cytidine: step 1/3. It functions in the pathway pyrimidine metabolism; UMP biosynthesis via salvage pathway; UMP from uridine: step 1/1. Its function is as follows. Phosphorylates uridine and cytidine to uridine monophosphate and cytidine monophosphate. Does not phosphorylate deoxyribonucleosides or purine ribonucleosides. Can use ATP or GTP as a phosphate donor. This is Uridine-cytidine kinase 1-A (uck1-a) from Xenopus laevis (African clawed frog).